We begin with the raw amino-acid sequence, 487 residues long: Transmembrane protein 161B (487 aa).

Residue asparagine 34 is glycosylated (N-linked (GlcNAc...) asparagine). Residues 107–127 (LVDFTVAATIVYLVTEVYYSF) traverse the membrane as a helical segment. Asparagine 135 carries an N-linked (GlcNAc...) asparagine glycan. A run of 2 helical transmembrane segments spans residues 136–156 (ISLV…FSLT) and 169–189 (SVCV…LIVT). The N-linked (GlcNAc...) asparagine glycan is linked to asparagine 203. The next 5 helical transmembrane spans lie at 228–248 (FKFF…FPGL), 265–285 (ITQT…LLWV), 305–325 (LMTE…LCVL), 367–387 (VFYY…MLLH), and 459–479 (LSFL…FGLF).

The protein belongs to the TMEM161 family.

It localises to the cell membrane. Essential for maintaining normal cardiac rhythm in the developing heart and for neonatal survival. Inhibits potassium and calcium currents in the cardiomyocytes, this assists in timely action potential repolarization and thereby maintains normal cardiac rhythm. This chain is Transmembrane protein 161B (Tmem161b), found in Mus musculus (Mouse).